The following is a 330-amino-acid chain: MTHILLLCGGGGTEHEVSLVSSKYISQQLSELDAFEITHLEIKDEGWFHIESGLKYELRSDKTLLSGETVSSPVDYVVPCIHGYPGETGDIQSMLDMLSIPYLGCDAESSTNSFNKITSKLWYDALGIPNTPYLFLTENNEETHQSALAAFKQWGGLFVKAACQGSSVGCYKVTSEAELSKAINDAFGYSQQVLVEKAVKPRELEVAAYEIDGQLFTTAPGEVTAPDGAFYTYDEKYGSGSHSTTSLDAQNLTEEQVKLIDQYSRKVFTQMKLKDLSRIDFFLTDDNEIYLNEVNTFPGMTPISMFPKLLEHNGDCFKTFLQKAVLNAIK.

In terms of domain architecture, ATP-grasp spans 120-326 (KLWYDALGIP…FKTFLQKAVL (207 aa)). 150–205 (AFKQWGGLFVKAACQGSSVGCYKVTSEAELSKAINDAFGYSQQVLVEKAVKPRELE) is a binding site for ATP. Mg(2+) contacts are provided by Asp-280, Glu-293, and Asn-295.

This sequence belongs to the D-alanine--D-alanine ligase family. The cofactor is Mg(2+). Mn(2+) serves as cofactor.

It is found in the cytoplasm. The catalysed reaction is 2 D-alanine + ATP = D-alanyl-D-alanine + ADP + phosphate + H(+). The protein operates within cell wall biogenesis; peptidoglycan biosynthesis. Its function is as follows. Cell wall formation. The protein is D-alanine--D-alanine ligase of Aliivibrio fischeri (strain ATCC 700601 / ES114) (Vibrio fischeri).